Here is a 321-residue protein sequence, read N- to C-terminus: Glucokinase (321 aa).

10 to 15 (GDIGGT) contributes to the ATP binding site.

It belongs to the bacterial glucokinase family.

The protein localises to the cytoplasm. It carries out the reaction D-glucose + ATP = D-glucose 6-phosphate + ADP + H(+). This chain is Glucokinase, found in Marinobacter nauticus (strain ATCC 700491 / DSM 11845 / VT8) (Marinobacter aquaeolei).